We begin with the raw amino-acid sequence, 459 residues long: UDP-N-acetylmuramoylalanine--D-glutamate ligase (459 aa).

119–125 (GTNGKTT) provides a ligand contact to ATP.

This sequence belongs to the MurCDEF family.

The protein localises to the cytoplasm. It carries out the reaction UDP-N-acetyl-alpha-D-muramoyl-L-alanine + D-glutamate + ATP = UDP-N-acetyl-alpha-D-muramoyl-L-alanyl-D-glutamate + ADP + phosphate + H(+). It functions in the pathway cell wall biogenesis; peptidoglycan biosynthesis. Cell wall formation. Catalyzes the addition of glutamate to the nucleotide precursor UDP-N-acetylmuramoyl-L-alanine (UMA). In Lacticaseibacillus paracasei (strain ATCC 334 / BCRC 17002 / CCUG 31169 / CIP 107868 / KCTC 3260 / NRRL B-441) (Lactobacillus paracasei), this protein is UDP-N-acetylmuramoylalanine--D-glutamate ligase.